Reading from the N-terminus, the 429-residue chain is MPQYQAVKGTRDIFPEEAARWKYVEGVVHAIASLYGFSEIRTPVFEYTELFQRGIGSTTDIVGKEMFSFLPDPKGRSLTLRPEMTAGVMRAALQNNLLSSAPVQKLYYIGELFRKERPQAGRQRQFSQFGAELLGVSSPAAVAEVITLMMQLFASLGLRSLKLRINSLGDTEDRLRYREALQLYFTPFHELLDDASKERLEKNPLRILDTKNPALQELVAGAPRLYDYLKDASLQDFEKVLFYLEERDIAYEIDYRLVRGLDYYCNTAFEVTSSELGAQDAIGGGGRYDGLARELGSSVDVPASGFAVGMERLLITMEKQGLFATLAPQGPLVYVIVQQQDLADNALQIVWRLRKAGIKTEVDLAARSMKAQMREANKIKAAYALFIGTTEETTGLYALKNLETSEQITLTLEAVLELLREQAVGEQLD.

The protein belongs to the class-II aminoacyl-tRNA synthetase family. In terms of assembly, homodimer.

The protein localises to the cytoplasm. The catalysed reaction is tRNA(His) + L-histidine + ATP = L-histidyl-tRNA(His) + AMP + diphosphate + H(+). The protein is Histidine--tRNA ligase of Pelodictyon phaeoclathratiforme (strain DSM 5477 / BU-1).